The chain runs to 497 residues: Galactose/methyl galactoside import ATP-binding protein MglA 1 (497 aa).

2 consecutive ABC transporter domains span residues 6–243 (LEMR…VGRD) and 256–494 (GKVR…VMSM). Residue 38–45 (GENGAGKS) participates in ATP binding.

This sequence belongs to the ABC transporter superfamily. Galactose/methyl galactoside importer (TC 3.A.1.2.3) family. As to quaternary structure, the complex is composed of one ATP-binding protein (MglA), two transmembrane proteins (MglC) and a solute-binding protein (MglB).

The protein localises to the cell inner membrane. It carries out the reaction D-galactose(out) + ATP + H2O = D-galactose(in) + ADP + phosphate + H(+). It catalyses the reaction methyl beta-D-galactoside(out) + ATP + H2O = methyl beta-D-galactoside(in) + ADP + phosphate + H(+). Its function is as follows. Part of the ABC transporter complex MglABC involved in galactose/methyl galactoside import. Responsible for energy coupling to the transport system. The sequence is that of Galactose/methyl galactoside import ATP-binding protein MglA 1 from Photobacterium profundum (strain SS9).